We begin with the raw amino-acid sequence, 297 residues long: MANQLKVGIIGAGAMGLLYAANFANISELTLFTRRKEQSDLLNQKGLSLKDNSELKNIHIQATVITDAEKLSEQELLIIAVKQYSLKTILPLLRSIPERVPLLFIQNGAAHLDSMPLLGNKRTILLGISEHGAGREDDTTVIWRGHGRTKYSIYQGELNEAVIKILDSNPDFPVEKHASYLDIINEKLFINAVINPLTAVLQVQNGKLLENKEWHELLKTIVKEIQTVLPVENALEKVEVICQVTATNFSSMALDRMNNRMTEIDGIVLPILEKGESLPTLHALYHLIKGLEGESDV.

Residues 11–16 (GAGAMG), Asn107, and Ala133 contribute to the NADP(+) site. Asn107 provides a ligand contact to substrate. Catalysis depends on Lys187, which acts as the Proton donor. Substrate is bound by residues Asn191, Asn195, Asn205, and Ser251. An NADP(+)-binding site is contributed by Glu263.

Belongs to the ketopantoate reductase family.

Its subcellular location is the cytoplasm. The enzyme catalyses (R)-pantoate + NADP(+) = 2-dehydropantoate + NADPH + H(+). It functions in the pathway cofactor biosynthesis; (R)-pantothenate biosynthesis; (R)-pantoate from 3-methyl-2-oxobutanoate: step 2/2. Its function is as follows. Catalyzes the NADPH-dependent reduction of ketopantoate into pantoic acid. In Listeria monocytogenes serovar 1/2a (strain ATCC BAA-679 / EGD-e), this protein is 2-dehydropantoate 2-reductase.